The following is a 355-amino-acid chain: UDP-N-acetylglucosamine--N-acetylmuramyl-(pentapeptide) pyrophosphoryl-undecaprenol N-acetylglucosamine transferase (355 aa).

Residues 15 to 17 (TGG), Asn-127, Arg-163, Ser-191, Ile-244, 263 to 268 (ALTVSE), and Gln-288 contribute to the UDP-N-acetyl-alpha-D-glucosamine site.

Belongs to the glycosyltransferase 28 family. MurG subfamily.

It is found in the cell inner membrane. The enzyme catalyses di-trans,octa-cis-undecaprenyl diphospho-N-acetyl-alpha-D-muramoyl-L-alanyl-D-glutamyl-meso-2,6-diaminopimeloyl-D-alanyl-D-alanine + UDP-N-acetyl-alpha-D-glucosamine = di-trans,octa-cis-undecaprenyl diphospho-[N-acetyl-alpha-D-glucosaminyl-(1-&gt;4)]-N-acetyl-alpha-D-muramoyl-L-alanyl-D-glutamyl-meso-2,6-diaminopimeloyl-D-alanyl-D-alanine + UDP + H(+). It participates in cell wall biogenesis; peptidoglycan biosynthesis. Its function is as follows. Cell wall formation. Catalyzes the transfer of a GlcNAc subunit on undecaprenyl-pyrophosphoryl-MurNAc-pentapeptide (lipid intermediate I) to form undecaprenyl-pyrophosphoryl-MurNAc-(pentapeptide)GlcNAc (lipid intermediate II). In Salmonella gallinarum (strain 287/91 / NCTC 13346), this protein is UDP-N-acetylglucosamine--N-acetylmuramyl-(pentapeptide) pyrophosphoryl-undecaprenol N-acetylglucosamine transferase.